Here is a 526-residue protein sequence, read N- to C-terminus: MLMLLVRGTHYENLRSKVVLPTPLAGRSTETFVSEFPGPDTGIRWRRSDEALRVNVGGVRRQLSARALARFPGTRLGRLHAAASEEQARRLCDDYDEAAREFYFDRHPGFFLSLLHFYRTGHLHVLDELCVFAFGQEADYWGLGENALAACCRARYLERRLTQPHAWDEDSDTPSSVDPCPDEISDVQRELARYGAARCGRLRRRLWLTMENPGYSLPSKLFSCVSISVVLASIAAMCIHSLPEYQAREAAAAVAAVAAGRSPEGVRDDPVLRRLEYFCIAWFSFEVSSRLLLAPSTRNFFCHPLNLIDIVSVLPFYLTLLAGVALGDQGGKEFGHLGKVVQVFRLMRIFRVLKLARHSTGLRSLGATLKHSYREVGILLLYLAVGVSVFSGVAYTAEKEEDVGFNTIPACWWWGTVSMTTVGYGDVVPVTVAGKLAASGCILGGILVVALPITIIFNKFSHFYRRQKALEAAVRNSNHREFEDLLSSVDGVSEASLETSGETSQEGRSADLESQAPSEPPHPQRY.

The Cytoplasmic portion of the chain corresponds to 1 to 217 (MLMLLVRGTH…LTMENPGYSL (217 aa)). Residues 218–239 (PSKLFSCVSISVVLASIAAMCI) form a helical membrane-spanning segment. Residues 240–270 (HSLPEYQAREAAAAVAAVAAGRSPEGVRDDP) lie on the Extracellular side of the membrane. Residues 271-293 (VLRRLEYFCIAWFSFEVSSRLLL) traverse the membrane as a helical segment. The Cytoplasmic segment spans residues 294–304 (APSTRNFFCHP). A helical transmembrane segment spans residues 305–322 (LNLIDIVSVLPFYLTLLA). The Extracellular segment spans residues 323–337 (GVALGDQGGKEFGHL). Residues 338–358 (GKVVQVFRLMRIFRVLKLARH) form a helical; Voltage-sensor membrane-spanning segment. The Cytoplasmic portion of the chain corresponds to 359–373 (STGLRSLGATLKHSY). A helical membrane pass occupies residues 374–395 (REVGILLLYLAVGVSVFSGVAY). Residues 396 to 408 (TAEKEEDVGFNTI) are Extracellular-facing. The helical intramembrane region spans 409-420 (PACWWWGTVSMT). A Selectivity filter motif is present at residues 421–426 (TVGYGD). Residues 421–428 (TVGYGDVV) lie within the membrane without spanning it. Topologically, residues 429–435 (PVTVAGK) are extracellular. Residues 436-464 (LAASGCILGGILVVALPITIIFNKFSHFY) traverse the membrane as a helical segment. Residues 465 to 526 (RRQKALEAAV…PSEPPHPQRY (62 aa)) lie on the Cytoplasmic side of the membrane. Residues 492–526 (VSEASLETSGETSQEGRSADLESQAPSEPPHPQRY) are disordered. The span at 496 to 507 (SLETSGETSQEG) shows a compositional bias: polar residues.

The protein belongs to the potassium channel family. S (TC 1.A.1.2) subfamily. Kv9.1/KCNS1 sub-subfamily. As to quaternary structure, heterotetramer with KCNB1. Heterotetramer with KCNB2. Does not form homomultimers.

Its subcellular location is the cell membrane. In terms of biological role, potassium channel regulatory subunit that modulate the delayed rectifier voltage-gated potassium channel activity of KCNB1 and KCNB2 by altering their kinetics, expression levels, and shifting the half-inactivation potential to more polarized values. While it does not form functional channels on its own, it can form functional heterotetrameric channels with KCNB1 and KCNB2. Each regulatory subunit has unique regulatory properties that can lead to extensive inhibition, significant changes in kinetics, and/or substantial shifts in the voltage dependencies of the inactivation process. In Gorilla gorilla gorilla (Western lowland gorilla), this protein is Delayed-rectifier potassium channel regulatory subunit KCNS1.